Consider the following 43-residue polypeptide: Photosystem II reaction center protein Psb30 (43 aa).

A helical membrane pass occupies residues 16 to 36; the sequence is IAQLTMLAMVLIAGPVVIVLL.

This sequence belongs to the Psb30/Ycf12 family. As to quaternary structure, PSII is composed of 1 copy each of membrane proteins PsbA, PsbB, PsbC, PsbD, PsbE, PsbF, PsbH, PsbI, PsbJ, PsbK, PsbL, PsbM, PsbT, PsbX, PsbY, PsbZ, Psb30/Ycf12, peripheral proteins PsbO, CyanoQ (PsbQ), PsbU, PsbV and a large number of cofactors. It forms dimeric complexes.

It localises to the cellular thylakoid membrane. Functionally, a core subunit of photosystem II (PSII), probably helps stabilize the reaction center. This is Photosystem II reaction center protein Psb30 from Trichodesmium erythraeum (strain IMS101).